The following is a 156-amino-acid chain: ATP synthase subunit b (156 aa).

The helical transmembrane segment at 5-25 (LTLIGQAIAFAVFVWFCMKFV) threads the bilayer.

The protein belongs to the ATPase B chain family. F-type ATPases have 2 components, F(1) - the catalytic core - and F(0) - the membrane proton channel. F(1) has five subunits: alpha(3), beta(3), gamma(1), delta(1), epsilon(1). F(0) has three main subunits: a(1), b(2) and c(10-14). The alpha and beta chains form an alternating ring which encloses part of the gamma chain. F(1) is attached to F(0) by a central stalk formed by the gamma and epsilon chains, while a peripheral stalk is formed by the delta and b chains.

The protein localises to the cell inner membrane. In terms of biological role, f(1)F(0) ATP synthase produces ATP from ADP in the presence of a proton or sodium gradient. F-type ATPases consist of two structural domains, F(1) containing the extramembraneous catalytic core and F(0) containing the membrane proton channel, linked together by a central stalk and a peripheral stalk. During catalysis, ATP synthesis in the catalytic domain of F(1) is coupled via a rotary mechanism of the central stalk subunits to proton translocation. Component of the F(0) channel, it forms part of the peripheral stalk, linking F(1) to F(0). The chain is ATP synthase subunit b from Chromohalobacter salexigens (strain ATCC BAA-138 / DSM 3043 / CIP 106854 / NCIMB 13768 / 1H11).